Here is a 648-residue protein sequence, read N- to C-terminus: ATP-dependent DNA helicase Q1 (648 aa).

The 176-residue stretch at 100-275 folds into the Helicase ATP-binding domain; it reads INVTMARKDI…QKILCVGKCL (176 aa). Residue 113–120 coordinates ATP; it reads MPTGGGKS. Residues 219–222 carry the DEVH box motif; it reads DEVH. The Helicase C-terminal domain occupies 299–451; the sequence is DFTEDIVKLI…EMVSYCQNVS (153 aa). Positions 453, 471, 475, and 478 each coordinate Zn(2+). 2 positions are modified to N6-acetyllysine: K514 and K522. A Phosphoserine modification is found at S597. Residues 601–648 form a disordered region; that stretch reads ALSEARQVEQVDSKGEEQSSGNSQKSKSRLQPSGSKNAGAKKRKLDDA. Basic and acidic residues predominate over residues 606–617; sequence RQVEQVDSKGEE. The span at 618–636 shows a compositional bias: polar residues; the sequence is QSSGNSQKSKSRLQPSGSK. A Phosphoserine modification is found at S633. Residues 639-648 show a composition bias toward basic residues; that stretch reads GAKKRKLDDA.

It belongs to the helicase family. RecQ subfamily. May form homodimers or higher order oligomers. Interacts with EXO1. Interacts with MLH1. Interacts with PARP1. It depends on Mg(2+) as a cofactor. The cofactor is Mn(2+). Zn(2+) serves as cofactor. Expressed in all tissues examined. In terms of tissue distribution, only expressed in spermatocytes. Expression increases at pachytene (17 days old) and decreases after completion of meiosis II (7 weeks old).

It localises to the nucleus. It catalyses the reaction Couples ATP hydrolysis with the unwinding of duplex DNA by translocating in the 3'-5' direction.. The catalysed reaction is ATP + H2O = ADP + phosphate + H(+). The enzyme catalyses dATP + H2O = dADP + phosphate + H(+). DNA helicase that plays a role in DNA damage repair and genome stability. Exhibits a magnesium- and ATP-dependent DNA-helicase activity that unwinds single- and double-stranded DNA in a 3'-5' direction. Plays a role in restoring regressed replication forks. Required to restart stalled replication forks induced by abortive topoisomerase 1 and 2 lesions. May play a role in the repair of DNA that is damaged by ultraviolet light or other mutagens. This Mus musculus (Mouse) protein is ATP-dependent DNA helicase Q1 (Recql).